The primary structure comprises 324 residues: Olfactory receptor 2T2 (324 aa).

The Extracellular portion of the chain corresponds to 1-26 (MGMEGLLQNSTNFVLTGLITHPAFPG). N9 carries an N-linked (GlcNAc...) asparagine glycan. Residues 27 to 50 (LLFAIVFSIFVVAITANLVMILLI) traverse the membrane as a helical segment. Topologically, residues 51 to 58 (HMDSRLHT) are cytoplasmic. Residues 59–80 (PMYFLLSQLSIMDTIYICITVP) traverse the membrane as a helical segment. The Extracellular segment spans residues 81–101 (KMLQDLLSKDKTISFLGCAVQ). C98 and C190 are disulfide-bonded. The helical transmembrane segment at 102–121 (IFLYLTLIGGEFFLLGLMAY) threads the bilayer. Residues 122-140 (DRYVAVCNPLRYPLLMNRR) are Cytoplasmic-facing. Residues 141–159 (VCLFMVVGSWVGGSLDGFM) form a helical membrane-spanning segment. Topologically, residues 160-196 (LTPVTMSFPFCRSREINHFFCEIPAVLKLSCTDTSLY) are extracellular. The chain crosses the membrane as a helical span at residues 197–220 (ETLMYACCVLMLLIPLSVISVSYT). Residues 221 to 237 (HILLTVHRMNSAEGRRK) are Cytoplasmic-facing. A helical membrane pass occupies residues 238-260 (AFATCSSHIMVVSVFYGAAFYTN). Residues 261-273 (VLPHSYHTPEKDK) lie on the Extracellular side of the membrane. A helical membrane pass occupies residues 274-293 (VVSAFYTILTPMLNPLIYSL). The Cytoplasmic segment spans residues 294-324 (RNKDVAAALRKVLGRCGSSQSIRVATVIRKG).

Belongs to the G-protein coupled receptor 1 family.

The protein resides in the cell membrane. Functionally, odorant receptor. The sequence is that of Olfactory receptor 2T2 (OR2T2) from Homo sapiens (Human).